The following is a 778-amino-acid chain: uncharacterized protein (778 aa).

Composition is skewed to polar residues over residues 1–11, 18–34, and 41–51; these read MPISSPGTRCS, TLQQ…QSLG, and GSITENYVQDS. Residues 1-60 form a disordered region; it reads MPISSPGTRCSSDLKDPTLQQYSAESVSTEQSLGTFEESKGSITENYVQDSSVDEHDDGN. The next 2 helical transmembrane spans lie at 356-381 and 401-423; these read YILM…APII and GFLA…GAHI.

The protein belongs to the TMCO4 family.

The protein localises to the golgi apparatus membrane. This is an uncharacterized protein from Schizosaccharomyces pombe (strain 972 / ATCC 24843) (Fission yeast).